A 206-amino-acid polypeptide reads, in one-letter code: MSERSGIFAGDDPFVLARAWLAEAEASEPNDPNAIALSTVDADGLPNARMVLLKEIESHGAGQGGFVFYTNYGSAKGQEIAQAGKAAFVCHWKSLHRQIRVRGLTETEDGPQADAYYASRSLKSRLGAWASDQSKPLSSRGALMADVARVTAEQGTNPKRPPFWGGVRITPLEIEFWADGAFRLHDRFQWRRGSVDDPWEVQRLNP.

FMN-binding positions include R49–K54, Y69–T70, K76, and Q98. K54 provides a ligand contact to substrate. The substrate site is built by Y116, R120, and S124. FMN is bound by residues Q133–S134 and W177. R183–H185 serves as a coordination point for substrate. R187 contacts FMN.

This sequence belongs to the pyridoxamine 5'-phosphate oxidase family. In terms of assembly, homodimer. FMN serves as cofactor.

The enzyme catalyses pyridoxamine 5'-phosphate + O2 + H2O = pyridoxal 5'-phosphate + H2O2 + NH4(+). The catalysed reaction is pyridoxine 5'-phosphate + O2 = pyridoxal 5'-phosphate + H2O2. It functions in the pathway cofactor metabolism; pyridoxal 5'-phosphate salvage; pyridoxal 5'-phosphate from pyridoxamine 5'-phosphate: step 1/1. Its pathway is cofactor metabolism; pyridoxal 5'-phosphate salvage; pyridoxal 5'-phosphate from pyridoxine 5'-phosphate: step 1/1. Its function is as follows. Catalyzes the oxidation of either pyridoxine 5'-phosphate (PNP) or pyridoxamine 5'-phosphate (PMP) into pyridoxal 5'-phosphate (PLP). In Jannaschia sp. (strain CCS1), this protein is Pyridoxine/pyridoxamine 5'-phosphate oxidase.